The primary structure comprises 547 residues: Putative laccase-5 (547 aa).

The first 35 residues, Met-1–Gly-35, serve as a signal peptide directing secretion. Plastocyanin-like domains follow at residues Asn-43–Gly-159 and Glu-170–Thr-323. Asn-48 and Asn-89 each carry an N-linked (GlcNAc...) asparagine glycan. The Cu cation site is built by His-93, His-95, His-138, and His-140. Residues Asn-199, Asn-215, Asn-251, Asn-311, Asn-342, Asn-349, Asn-388, Asn-395, Asn-405, and Asn-430 are each glycosylated (N-linked (GlcNAc...) asparagine). The Plastocyanin-like 3 domain maps to Phe-408–Pro-531. Residues His-448, His-451, His-453, His-510, Cys-511, His-512, and His-516 each contribute to the Cu cation site.

Belongs to the multicopper oxidase family. Requires Cu cation as cofactor.

The protein resides in the secreted. It is found in the extracellular space. Its subcellular location is the apoplast. The enzyme catalyses 4 hydroquinone + O2 = 4 benzosemiquinone + 2 H2O. Lignin degradation and detoxification of lignin-derived products. In Oryza sativa subsp. japonica (Rice), this protein is Putative laccase-5 (LAC5).